We begin with the raw amino-acid sequence, 307 residues long: Small ribosomal subunit biogenesis GTPase RsgA (307 aa).

The CP-type G domain occupies 80–237 (KVDLRQAIVS…IVDTPGIKEF (158 aa)). Residues 129–132 (NKID) and 180–188 (GQSGVGKSS) each bind GTP. Residues cysteine 261, cysteine 266, histidine 268, and cysteine 274 each contribute to the Zn(2+) site.

This sequence belongs to the TRAFAC class YlqF/YawG GTPase family. RsgA subfamily. In terms of assembly, monomer. Associates with 30S ribosomal subunit, binds 16S rRNA. The cofactor is Zn(2+).

It localises to the cytoplasm. Functionally, one of several proteins that assist in the late maturation steps of the functional core of the 30S ribosomal subunit. Helps release RbfA from mature subunits. May play a role in the assembly of ribosomal proteins into the subunit. Circularly permuted GTPase that catalyzes slow GTP hydrolysis, GTPase activity is stimulated by the 30S ribosomal subunit. The chain is Small ribosomal subunit biogenesis GTPase RsgA from Borrelia garinii subsp. bavariensis (strain ATCC BAA-2496 / DSM 23469 / PBi) (Borreliella bavariensis).